A 439-amino-acid polypeptide reads, in one-letter code: Ribosomal protein uS12 methylthiotransferase RimO (439 aa).

An MTTase N-terminal domain is found at 6–116 (GKVGFVSLGC…VMNQVHQVAP (111 aa)). [4Fe-4S] cluster-binding residues include Cys15, Cys51, Cys80, Cys148, Cys152, and Cys155. In terms of domain architecture, Radical SAM core spans 134 to 371 (LTPKHYAYLK…MEVQQRISAS (238 aa)). The region spanning 374 to 439 (QAKIGKRMDV…DEYDLWGRPV (66 aa)) is the TRAM domain.

This sequence belongs to the methylthiotransferase family. RimO subfamily. It depends on [4Fe-4S] cluster as a cofactor.

The protein localises to the cytoplasm. The enzyme catalyses L-aspartate(89)-[ribosomal protein uS12]-hydrogen + (sulfur carrier)-SH + AH2 + 2 S-adenosyl-L-methionine = 3-methylsulfanyl-L-aspartate(89)-[ribosomal protein uS12]-hydrogen + (sulfur carrier)-H + 5'-deoxyadenosine + L-methionine + A + S-adenosyl-L-homocysteine + 2 H(+). Functionally, catalyzes the methylthiolation of an aspartic acid residue of ribosomal protein uS12. This chain is Ribosomal protein uS12 methylthiotransferase RimO, found in Hahella chejuensis (strain KCTC 2396).